Here is a 160-residue protein sequence, read N- to C-terminus: UPF0260 protein Rleg2_0895 (160 aa).

Belongs to the UPF0260 family.

This is UPF0260 protein Rleg2_0895 from Rhizobium leguminosarum bv. trifolii (strain WSM2304).